A 155-amino-acid chain; its full sequence is Small ribosomal subunit protein uS9 (155 aa).

It belongs to the universal ribosomal protein uS9 family.

The sequence is that of Small ribosomal subunit protein uS9 from Rhizobium johnstonii (strain DSM 114642 / LMG 32736 / 3841) (Rhizobium leguminosarum bv. viciae).